A 447-amino-acid polypeptide reads, in one-letter code: Xylose isomerase (447 aa).

Active-site residues include histidine 102 and aspartate 105. Residues glutamate 233, glutamate 269, histidine 272, aspartate 297, aspartate 308, aspartate 310, and aspartate 340 each contribute to the Mg(2+) site.

Belongs to the xylose isomerase family. As to quaternary structure, homotetramer. It depends on Mg(2+) as a cofactor.

The protein localises to the cytoplasm. It carries out the reaction alpha-D-xylose = alpha-D-xylulofuranose. This Pediococcus pentosaceus (strain ATCC 25745 / CCUG 21536 / LMG 10740 / 183-1w) protein is Xylose isomerase.